The primary structure comprises 85 residues: Depressant insect toxin BmK ITa1 (85 aa).

The N-terminal stretch at 1–21 (MKLFLLLLISASMLIDGLVNA) is a signal peptide. The 61-residue stretch at 22 to 82 (DGYIRGSNGC…TWKSESNTCG (61 aa)) folds into the LCN-type CS-alpha/beta domain. 4 disulfides stabilise this stretch: Cys-31-Cys-81, Cys-35-Cys-56, Cys-42-Cys-63, and Cys-46-Cys-65. Gly-82 is modified (glycine amide).

This sequence belongs to the long (4 C-C) scorpion toxin superfamily. Sodium channel inhibitor family. Beta subfamily. Expressed by the venom gland.

It is found in the secreted. In terms of biological role, depressant insect toxins cause a transient contraction paralysis followed by a slow flaccid paralysis. They bind voltage-independently to sodium channels (Nav) and block action potentials, primarily by depolarizing the axonal membrane and suppressing the sodium current. In Olivierus martensii (Manchurian scorpion), this protein is Depressant insect toxin BmK ITa1.